A 209-amino-acid polypeptide reads, in one-letter code: Pyridoxine/pyridoxamine 5'-phosphate oxidase (209 aa).

Substrate contacts are provided by residues arginine 7–tyrosine 10 and lysine 64. FMN is bound by residues arginine 59 to lysine 64, phenylalanine 74 to threonine 75, arginine 80, and lysine 81. Substrate contacts are provided by tyrosine 121, arginine 125, and serine 129. FMN is bound by residues glutamine 138–serine 139 and tryptophan 182. Arginine 188–histidine 190 is a substrate binding site. Residue arginine 192 participates in FMN binding.

This sequence belongs to the pyridoxamine 5'-phosphate oxidase family. As to quaternary structure, homodimer. Requires FMN as cofactor.

It catalyses the reaction pyridoxamine 5'-phosphate + O2 + H2O = pyridoxal 5'-phosphate + H2O2 + NH4(+). The catalysed reaction is pyridoxine 5'-phosphate + O2 = pyridoxal 5'-phosphate + H2O2. It functions in the pathway cofactor metabolism; pyridoxal 5'-phosphate salvage; pyridoxal 5'-phosphate from pyridoxamine 5'-phosphate: step 1/1. It participates in cofactor metabolism; pyridoxal 5'-phosphate salvage; pyridoxal 5'-phosphate from pyridoxine 5'-phosphate: step 1/1. Its function is as follows. Catalyzes the oxidation of either pyridoxine 5'-phosphate (PNP) or pyridoxamine 5'-phosphate (PMP) into pyridoxal 5'-phosphate (PLP). The sequence is that of Pyridoxine/pyridoxamine 5'-phosphate oxidase from Actinobacillus pleuropneumoniae serotype 7 (strain AP76).